Here is a 439-residue protein sequence, read N- to C-terminus: Serine hydroxymethyltransferase (439 aa).

A (6S)-5,6,7,8-tetrahydrofolate-binding site is contributed by 126–128 (AHV). Position 232 is an N6-(pyridoxal phosphate)lysine (Lys232).

This sequence belongs to the SHMT family. Homodimer. The cofactor is pyridoxal 5'-phosphate.

Its subcellular location is the cytoplasm. Its pathway is amino-acid biosynthesis; glycine biosynthesis; glycine from L-serine: step 1/1. Its function is as follows. Catalyzes the reversible interconversion of serine and glycine with a modified folate serving as the one-carbon carrier. Also exhibits a pteridine-independent aldolase activity toward beta-hydroxyamino acids, producing glycine and aldehydes, via a retro-aldol mechanism. This is Serine hydroxymethyltransferase from Staphylothermus marinus (strain ATCC 43588 / DSM 3639 / JCM 9404 / F1).